Consider the following 328-residue polypeptide: Arabinose 5-phosphate isomerase KdsD (328 aa).

Residues 41–184 enclose the SIS domain; sequence ACEAIFRCHG…AVALLKARGF (144 aa). Substrate-binding positions include 75–76, H82, H88, 114–123, and 148–150; these read GT, TLIPVLKRQK, and NVP. H82 contacts Zn(2+). In terms of domain architecture, CBS 1 spans 210 to 268; sequence MHTGTEIPTVSPDASLRDALLEITRKSLGLTVICDDSMRIKGIFTDGDLRRVFDMGIDL. Position 275 (D275) interacts with substrate. The 52-residue stretch at 277–328 folds into the CBS 2 domain; sequence MTRGGIRVPPNILAVDALNLMESRHITALLVADGDQLLGVVHMHDMLRAGVV.

The protein belongs to the SIS family. GutQ/KpsF subfamily. In terms of assembly, homotetramer.

It catalyses the reaction D-arabinose 5-phosphate = D-ribulose 5-phosphate. The protein operates within carbohydrate biosynthesis; 3-deoxy-D-manno-octulosonate biosynthesis; 3-deoxy-D-manno-octulosonate from D-ribulose 5-phosphate: step 1/3. It participates in bacterial outer membrane biogenesis; lipopolysaccharide biosynthesis. Its function is as follows. Involved in the biosynthesis of 3-deoxy-D-manno-octulosonate (KDO), a unique 8-carbon sugar component of lipopolysaccharides (LPSs). Catalyzes the reversible aldol-ketol isomerization between D-ribulose 5-phosphate (Ru5P) and D-arabinose 5-phosphate (A5P). This chain is Arabinose 5-phosphate isomerase KdsD (kdsD), found in Yersinia pestis.